A 96-amino-acid chain; its full sequence is Transcription and mRNA export factor SUS1 (96 aa).

A Glycyl lysine isopeptide (Lys-Gly) (interchain with G-Cter in ubiquitin) cross-link involves residue lysine 68.

The protein belongs to the ENY2 family. As to quaternary structure, component of the nuclear pore complex (NPC)-associated TREX-2 complex (transcription and export complex 2), composed of at least SUS1, SAC3, THP1, SEM1, and CDC31. TREX-2 contains 2 SUS1 chains. The TREX-2 complex interacts with the nucleoporin NUP1. Component of the 1.8 MDa SAGA transcription coactivator-HAT complex. SAGA is built of 5 distinct domains with specialized functions. Within the SAGA complex, SUS1, SGF11, SGF73 and UBP8 form an additional subcomplex of SAGA called the DUB module (deubiquitination module). Interacts directly with THP1, SAC3, SGF11, and with the RNA polymerase II.

It is found in the nucleus. The protein localises to the nucleoplasm. Its subcellular location is the cytoplasm. The protein resides in the P-body. Functionally, involved in mRNA export coupled transcription activation by association with both the TREX-2 and the SAGA complexes. At the promoters, SAGA is required for recruitment of the basal transcription machinery. It influences RNA polymerase II transcriptional activity through different activities such as TBP interaction and promoter selectivity, interaction with transcription activators, and chromatin modification through histone acetylation and deubiquitination. Within the SAGA complex, participates in a subcomplex required for deubiquitination of H2B and for the maintenance of steady-state H3 methylation levels. The TREX-2 complex functions in docking export-competent ribonucleoprotein particles (mRNPs) to the nuclear entrance of the nuclear pore complex (nuclear basket). TREX-2 participates in mRNA export and accurate chromatin positioning in the nucleus by tethering genes to the nuclear periphery. May also be involved in cytoplasmic mRNA decay by interaction with components of P-bodies. This chain is Transcription and mRNA export factor SUS1, found in Saccharomyces cerevisiae (strain RM11-1a) (Baker's yeast).